The sequence spans 866 residues: FHIP family protein v1g243165 (866 aa).

Disordered regions lie at residues 739–761 (RDGP…ASTS) and 781–814 (GSTA…ESQT). Residues 751 to 761 (SIGSIGSASTS) are compositionally biased toward low complexity.

The protein belongs to the FHIP family.

This Nematostella vectensis (Starlet sea anemone) protein is FHIP family protein v1g243165.